The primary structure comprises 78 residues: MALFEDIQAVIAEQLNVDAAQVTPEAEFVKDLGADSLDVVELIMALEEKFNIEIPDEQAEKIVNVGDVVKYIEDNKLA.

The region spanning 1 to 76 (MALFEDIQAV…DVVKYIEDNK (76 aa)) is the Carrier domain. S36 bears the O-(pantetheine 4'-phosphoryl)serine mark.

The protein belongs to the acyl carrier protein (ACP) family. 4'-phosphopantetheine is transferred from CoA to a specific serine of apo-ACP by AcpS. This modification is essential for activity because fatty acids are bound in thioester linkage to the sulfhydryl of the prosthetic group.

It is found in the cytoplasm. It participates in lipid metabolism; fatty acid biosynthesis. Functionally, carrier of the growing fatty acid chain in fatty acid biosynthesis. The polypeptide is Acyl carrier protein (Helicobacter pylori (strain J99 / ATCC 700824) (Campylobacter pylori J99)).